The sequence spans 187 residues: UPF0301 protein YqgE (187 aa).

It belongs to the UPF0301 (AlgH) family.

The polypeptide is UPF0301 protein YqgE (Escherichia fergusonii (strain ATCC 35469 / DSM 13698 / CCUG 18766 / IAM 14443 / JCM 21226 / LMG 7866 / NBRC 102419 / NCTC 12128 / CDC 0568-73)).